The primary structure comprises 455 residues: Exodeoxyribonuclease 7 large subunit (455 aa).

It belongs to the XseA family. In terms of assembly, heterooligomer composed of large and small subunits.

Its subcellular location is the cytoplasm. It carries out the reaction Exonucleolytic cleavage in either 5'- to 3'- or 3'- to 5'-direction to yield nucleoside 5'-phosphates.. Functionally, bidirectionally degrades single-stranded DNA into large acid-insoluble oligonucleotides, which are then degraded further into small acid-soluble oligonucleotides. This Escherichia fergusonii (strain ATCC 35469 / DSM 13698 / CCUG 18766 / IAM 14443 / JCM 21226 / LMG 7866 / NBRC 102419 / NCTC 12128 / CDC 0568-73) protein is Exodeoxyribonuclease 7 large subunit.